Reading from the N-terminus, the 195-residue chain is ATP-dependent Clp protease proteolytic subunit (195 aa).

Ser98 acts as the Nucleophile in catalysis. His123 is an active-site residue.

The protein belongs to the peptidase S14 family. In terms of assembly, fourteen ClpP subunits assemble into 2 heptameric rings which stack back to back to give a disk-like structure with a central cavity, resembling the structure of eukaryotic proteasomes.

Its subcellular location is the cytoplasm. It catalyses the reaction Hydrolysis of proteins to small peptides in the presence of ATP and magnesium. alpha-casein is the usual test substrate. In the absence of ATP, only oligopeptides shorter than five residues are hydrolyzed (such as succinyl-Leu-Tyr-|-NHMec, and Leu-Tyr-Leu-|-Tyr-Trp, in which cleavage of the -Tyr-|-Leu- and -Tyr-|-Trp bonds also occurs).. Cleaves peptides in various proteins in a process that requires ATP hydrolysis. Has a chymotrypsin-like activity. Plays a major role in the degradation of misfolded proteins. This is ATP-dependent Clp protease proteolytic subunit from Staphylococcus aureus (strain Mu3 / ATCC 700698).